A 112-amino-acid polypeptide reads, in one-letter code: High mobility group protein D (112 aa).

The HMG box DNA-binding region spans proline 5 to glutamate 71. Serine 10 bears the Phosphoserine mark. Tyrosine 12 is subject to Phosphotyrosine. Residues alanine 72 to glutamate 112 are disordered. Residues alanine 84–serine 98 show a composition bias toward basic residues. Residues serine 103 and serine 111 each carry the phosphoserine modification. Positions serine 103–glutamate 112 are enriched in acidic residues.

The protein belongs to the HMGB family.

It is found in the nucleus. It localises to the chromosome. In terms of biological role, binds preferentially single-stranded DNA and unwinds double-stranded DNA. Prefers sites containing the sequence 5'-ttg-3'. Facilitates DNA bending. Associated with early embryonic chromatin in the absence of histone H1. The polypeptide is High mobility group protein D (HmgD) (Drosophila melanogaster (Fruit fly)).